Reading from the N-terminus, the 262-residue chain is Acyl-[acyl-carrier-protein]--UDP-N-acetylglucosamine O-acyltransferase (262 aa).

This sequence belongs to the transferase hexapeptide repeat family. LpxA subfamily. Homotrimer.

It is found in the cytoplasm. It carries out the reaction a (3R)-hydroxyacyl-[ACP] + UDP-N-acetyl-alpha-D-glucosamine = a UDP-3-O-[(3R)-3-hydroxyacyl]-N-acetyl-alpha-D-glucosamine + holo-[ACP]. Its pathway is glycolipid biosynthesis; lipid IV(A) biosynthesis; lipid IV(A) from (3R)-3-hydroxytetradecanoyl-[acyl-carrier-protein] and UDP-N-acetyl-alpha-D-glucosamine: step 1/6. Functionally, involved in the biosynthesis of lipid A, a phosphorylated glycolipid that anchors the lipopolysaccharide to the outer membrane of the cell. The sequence is that of Acyl-[acyl-carrier-protein]--UDP-N-acetylglucosamine O-acyltransferase from Salmonella paratyphi B (strain ATCC BAA-1250 / SPB7).